We begin with the raw amino-acid sequence, 153 residues long: Large ribosomal subunit protein uL22 (153 aa).

It belongs to the universal ribosomal protein uL22 family. Part of the 50S ribosomal subunit.

Functionally, this protein binds specifically to 23S rRNA. It makes multiple contacts with different domains of the 23S rRNA in the assembled 50S subunit and ribosome. Its function is as follows. The globular domain of the protein is located near the polypeptide exit tunnel on the outside of the subunit, while an extended beta-hairpin is found that lines the wall of the exit tunnel in the center of the 70S ribosome. This chain is Large ribosomal subunit protein uL22, found in Methanococcus aeolicus (strain ATCC BAA-1280 / DSM 17508 / OCM 812 / Nankai-3).